The chain runs to 84 residues: Acyl-CoA-binding protein (84 aa).

Residues 1-84 (MTTFEEAAQK…LYEQLATKYA (84 aa)) enclose the ACB domain. Residues Lys12, 27-31 (YGLYK), Lys53, and Tyr72 each bind an acyl-CoA.

Belongs to the ACBP family. Interacts with dhkA.

Its function is as follows. Binds to acyl-CoA. Processed into the SDF-2 (spore differentiation factor 2) a peptide which triggers sporulation. SDF-2 appears to stimulate prestalk cells to release additional SDF-2 by acting through a signal transduction pathway that also involves dhkA, regA and PKA. Induces encapsulation of prespore cells in a dhkA-dependent manner. GABA induces the release of acbA from prespore cells and induces the exposure of tagC on the surface of prestalk cells where it can convert acbA to SDF-2. Glutamate acts as a competitive inhibitor and is also able to inhibit induction of sporulation by SDF-2. This is Acyl-CoA-binding protein (acbA) from Dictyostelium discoideum (Social amoeba).